A 369-amino-acid chain; its full sequence is Probable dual-specificity RNA methyltransferase RlmN (369 aa).

Catalysis depends on E108, which acts as the Proton acceptor. Residues Y114–R351 enclose the Radical SAM core domain. Cysteines 121 and 362 form a disulfide. Residues C128, C132, and C135 each coordinate [4Fe-4S] cluster. S-adenosyl-L-methionine-binding positions include G183–E184, S217, S240–H242, and N319. The active-site S-methylcysteine intermediate is C362.

The protein belongs to the radical SAM superfamily. RlmN family. It depends on [4Fe-4S] cluster as a cofactor.

Its subcellular location is the cytoplasm. It carries out the reaction adenosine(2503) in 23S rRNA + 2 reduced [2Fe-2S]-[ferredoxin] + 2 S-adenosyl-L-methionine = 2-methyladenosine(2503) in 23S rRNA + 5'-deoxyadenosine + L-methionine + 2 oxidized [2Fe-2S]-[ferredoxin] + S-adenosyl-L-homocysteine. The enzyme catalyses adenosine(37) in tRNA + 2 reduced [2Fe-2S]-[ferredoxin] + 2 S-adenosyl-L-methionine = 2-methyladenosine(37) in tRNA + 5'-deoxyadenosine + L-methionine + 2 oxidized [2Fe-2S]-[ferredoxin] + S-adenosyl-L-homocysteine. Specifically methylates position 2 of adenine 2503 in 23S rRNA and position 2 of adenine 37 in tRNAs. The protein is Probable dual-specificity RNA methyltransferase RlmN of Rhodococcus jostii (strain RHA1).